Consider the following 485-residue polypeptide: Cyclic GMP-AMP synthase-like receptor (485 aa).

ATP is bound by residues serine 70 and 82-84 (EYD). Residues glutamate 82, aspartate 84, and aspartate 204 each coordinate Mg(2+). GTP is bound by residues aspartate 204 and 247 to 254 (RLSFYEQE). 2 residues coordinate ATP: lysine 271 and lysine 274. Residues isoleucine 298 and aspartate 304 each contribute to the Mn(2+) site.

Belongs to the mab-21 family. It depends on Mg(2+) as a cofactor. Mn(2+) serves as cofactor.

It carries out the reaction GTP + ATP = 2',3'-cGAMP + 2 diphosphate. The enzyme catalyses GTP + ATP = pppGp(2'-5')A + diphosphate. It catalyses the reaction pppGp(2'-5')A = 2',3'-cGAMP + diphosphate. Functionally, nucleotidyltransferase that catalyzes the formation of cyclic GMP-AMP (2',3'-cGAMP) from ATP and GTP and plays a key role in innate immunity. Directly binds some unknown ligand, activating the nucleotidyltransferase activity, leading to synthesis of 2',3'-cGAMP, a second messenger that binds to and activates Sting, thereby triggering the immune response via activation of the NF-kappa-B transcription factor. The chain is Cyclic GMP-AMP synthase-like receptor from Trichogramma pretiosum (Parasitoid wasp).